The chain runs to 249 residues: Type I iodothyronine deiodinase (249 aa).

At 1–12 the chain is on the extracellular side; that stretch reads MELPLPGLWLKR. A helical; Signal-anchor for type III membrane protein transmembrane segment spans residues 13–33; that stretch reads LWVLFQVALHVAMGKVLMTLF. At 34–249 the chain is on the cytoplasmic side; it reads PGRVKQDILA…VRAVLEKLHS (216 aa). U126 is a catalytic residue. Position 126 (U126) is a non-standard amino acid, selenocysteine.

Belongs to the iodothyronine deiodinase family. Predominantly monomer. Can form homodimers but homodimerization is not essential for enzyme activity.

The protein resides in the cell membrane. It is found in the endoplasmic reticulum membrane. Its subcellular location is the basolateral cell membrane. It catalyses the reaction 3,3',5-triiodo-L-thyronine + iodide + A + H(+) = L-thyroxine + AH2. The catalysed reaction is 3,3',5'-triiodo-L-thyronine + iodide + A + H(+) = L-thyroxine + AH2. It carries out the reaction 3,3'-diiodo-L-thyronine + iodide + A + H(+) = 3,3',5'-triiodo-L-thyronine + AH2. The enzyme catalyses 3,3'-diiodo-L-thyronine + iodide + A + H(+) = 3,3',5-triiodo-L-thyronine + AH2. It catalyses the reaction 3'-iodo-L-thyronine + iodide + A + H(+) = 3',5'-diiodo-L-thyronine + AH2. The catalysed reaction is 3-iodo-L-thyronine + iodide + A + H(+) = 3,5-diiodo-L-thyronine + AH2. It carries out the reaction 3-iodo-L-thyronine + iodide + A + H(+) = 3,3'-diiodo-L-thyronine + AH2. The enzyme catalyses 3,3'-diiodothyronamine + iodide + A + H(+) = 3,3',5'-triiodothyronamine + AH2. It catalyses the reaction 3'-iodothyronamine + iodide + A + H(+) = 3',5'-diiodothyronamine + AH2. The catalysed reaction is 3-iodothyronamine + iodide + A + H(+) = 3,3'-diiodothyronamine + AH2. It carries out the reaction 3,3'-diiodothyronamine + iodide + A + H(+) = 3,3',5-triiodothyronamine + AH2. The enzyme catalyses 3-iodothyronamine + iodide + A + H(+) = 3,5-diiodothyronamine + AH2. It catalyses the reaction 3,3'-diiodo-L-thyronine sulfate + iodide + A + H(+) = 3,3',5'-triiodo-L-thyronine sulfate + AH2. The catalysed reaction is 3,3',5'-triiodo-L-thyronine sulfate + iodide + A + H(+) = L-thyroxine sulfate + AH2. It carries out the reaction 3,3'-diiodo-L-thyronine sulfate + iodide + A + H(+) = 3,3',5-triiodo-L-thyronine sulfate + AH2. Plays a crucial role in the metabolism of thyroid hormones (TH) and has specific roles in TH activation and inactivation by deiodination. Catalyzes the deiodination of L-thyroxine (T4) to 3,5,3'-triiodothyronine (T3) and 3,3',5'-triiodothyronine (rT3) to 3,3'-diiodothyronine (3,3'-T2) via outer-ring deiodination (ORD). Catalyzes the deiodination of T4 to rT3, T3 to 3,3'-T2, 3,5-diiodothyronine (3,5-T2) to 3-monoiodothyronine (3-T1) and 3,3'-T2 to 3-T1 via inner-ring deiodination (IRD). Catalyzes the deiodination of 3',5'-diiodothyronine (3',5'-T2) to 3'-monoiodothyronine (3'-T1) via ORD. Catalyzes the phenolic ring deiodinations of 3,3',5'-triiodothyronamine, 3',5'-diiodothyronamine and 3,3'-diiodothyronamine as well as tyrosyl ring deiodinations of 3,5,3'-triiodothyronamine and 3,5-diiodothyronamine. Catalyzes the deiodination of L-thyroxine sulfate and 3,3',5-triiodo-L-thyronine sulfate via IRD and of 3,3',5'-triiodo-L-thyronine sulfate via ORD. The chain is Type I iodothyronine deiodinase (DIO1) from Sus scrofa (Pig).